Here is a 418-residue protein sequence, read N- to C-terminus: D-amino acid dehydrogenase 1 (418 aa).

3-17 (IMVLGGGVIGVTTAY) is a binding site for FAD.

Belongs to the DadA oxidoreductase family. Requires FAD as cofactor.

It catalyses the reaction a D-alpha-amino acid + A + H2O = a 2-oxocarboxylate + AH2 + NH4(+). It functions in the pathway amino-acid degradation; D-alanine degradation; NH(3) and pyruvate from D-alanine: step 1/1. Its function is as follows. Oxidative deamination of D-amino acids. This is D-amino acid dehydrogenase 1 (dadA1) from Mesorhizobium japonicum (strain LMG 29417 / CECT 9101 / MAFF 303099) (Mesorhizobium loti (strain MAFF 303099)).